A 240-amino-acid chain; its full sequence is Pro-opiomelanocortin B (240 aa).

The signal sequence occupies residues 1–36; that stretch reads MFGTFLQNQSVRLNMVCAPWLLAVVVVCVCNPGVEG. Pyrrolidone carboxylic acid is present on glutamine 37. Residue histidine 111 is a propeptide. Serine 112 carries the N-acetylserine; in Corticotropin modification. Isoleucine 124 bears the Isoleucine amide mark.

This sequence belongs to the POMC family. In terms of processing, specific enzymatic cleavages at paired basic residues yield the different active peptides. Post-translationally, acetylation of beta-endorphin occurs in a tissue-specific manner. Pituitary and hypothalamus of adult diploid animals.

It localises to the secreted. In terms of biological role, stimulates the adrenal glands to release cortisol. Functionally, melanocyte-stimulating hormone alpha: Anorexigenic peptide. Increases the pigmentation of skin by increasing melanin production in melanocytes. Melanocyte-stimulating hormone beta: Increases the pigmentation of skin by increasing melanin production in melanocytes. Its function is as follows. Beta-endorphin: Endogenous orexigenic opiate. In terms of biological role, endogenous opiate. The protein is Pro-opiomelanocortin B (pomcb) of Oncorhynchus mykiss (Rainbow trout).